The primary structure comprises 161 residues: Crossover junction endodeoxyribonuclease RuvC (161 aa).

Residues Asp-8, Glu-67, and Asp-139 contribute to the active site. Asp-8, Glu-67, and Asp-139 together coordinate Mg(2+).

This sequence belongs to the RuvC family. As to quaternary structure, homodimer which binds Holliday junction (HJ) DNA. The HJ becomes 2-fold symmetrical on binding to RuvC with unstacked arms; it has a different conformation from HJ DNA in complex with RuvA. In the full resolvosome a probable DNA-RuvA(4)-RuvB(12)-RuvC(2) complex forms which resolves the HJ. Mg(2+) serves as cofactor.

Its subcellular location is the cytoplasm. The enzyme catalyses Endonucleolytic cleavage at a junction such as a reciprocal single-stranded crossover between two homologous DNA duplexes (Holliday junction).. In terms of biological role, the RuvA-RuvB-RuvC complex processes Holliday junction (HJ) DNA during genetic recombination and DNA repair. Endonuclease that resolves HJ intermediates. Cleaves cruciform DNA by making single-stranded nicks across the HJ at symmetrical positions within the homologous arms, yielding a 5'-phosphate and a 3'-hydroxyl group; requires a central core of homology in the junction. The consensus cleavage sequence is 5'-(A/T)TT(C/G)-3'. Cleavage occurs on the 3'-side of the TT dinucleotide at the point of strand exchange. HJ branch migration catalyzed by RuvA-RuvB allows RuvC to scan DNA until it finds its consensus sequence, where it cleaves and resolves the cruciform DNA. The chain is Crossover junction endodeoxyribonuclease RuvC from Wigglesworthia glossinidia brevipalpis.